A 241-amino-acid polypeptide reads, in one-letter code: Ribonuclease PH (241 aa).

Phosphate contacts are provided by residues arginine 89 and 127 to 129; that span reads GTR.

It belongs to the RNase PH family. In terms of assembly, homohexameric ring arranged as a trimer of dimers.

The catalysed reaction is tRNA(n+1) + phosphate = tRNA(n) + a ribonucleoside 5'-diphosphate. Functionally, phosphorolytic 3'-5' exoribonuclease that plays an important role in tRNA 3'-end maturation. Removes nucleotide residues following the 3'-CCA terminus of tRNAs; can also add nucleotides to the ends of RNA molecules by using nucleoside diphosphates as substrates, but this may not be physiologically important. Probably plays a role in initiation of 16S rRNA degradation (leading to ribosome degradation) during starvation. The chain is Ribonuclease PH from Xanthomonas campestris pv. campestris (strain 8004).